A 129-amino-acid chain; its full sequence is NHP2-like protein 1 homolog (129 aa).

The protein belongs to the eukaryotic ribosomal protein eL8 family.

The protein localises to the nucleus. It localises to the nucleolus. Binds to the 5'-stem-loop of U4 snRNA and may play a role in the late stage of spliceosome assembly. The protein undergoes a conformational change upon RNA-binding. The polypeptide is NHP2-like protein 1 homolog (Dictyostelium discoideum (Social amoeba)).